The chain runs to 121 residues: MARIAGVDIPRDKRVVISLTYVFGIGRTTAQQVLKEAGVSEDTRVRDLTEDELGKIRDIIDKLKVEGDLRREVSLNIKRLIEIGSYRGIRHRRGLPVRGQNTKNNARTRKGPRRTVANKKK.

The tract at residues 93–121 (RGLPVRGQNTKNNARTRKGPRRTVANKKK) is disordered. Residues 106–121 (ARTRKGPRRTVANKKK) are compositionally biased toward basic residues.

The protein belongs to the universal ribosomal protein uS13 family. Part of the 30S ribosomal subunit. Forms a loose heterodimer with protein S19. Forms two bridges to the 50S subunit in the 70S ribosome.

Its function is as follows. Located at the top of the head of the 30S subunit, it contacts several helices of the 16S rRNA. In the 70S ribosome it contacts the 23S rRNA (bridge B1a) and protein L5 of the 50S subunit (bridge B1b), connecting the 2 subunits; these bridges are implicated in subunit movement. Contacts the tRNAs in the A and P-sites. The sequence is that of Small ribosomal subunit protein uS13 from Bacillus pumilus (strain SAFR-032).